Reading from the N-terminus, the 1260-residue chain is Agglutinin-like protein 1 (1260 aa).

Residues 1–17 (MLQQFTLLFLYLSIASA) form the signal peptide. 4 disulfides stabilise this stretch: C73/C150, C96/C112, C205/C298, and C227/C256. ALS repeat units lie at residues 365–396 (TTIT…VDVP), 401–432 (TTVT…VQVP), and 438–469 (VSTT…IREP). A glycan (N-linked (GlcNAc...) asparagine) is linked at N471. Residues 474–505 (VTTTEYWSQSFATTTTVTAPPGETDTVIIREP) form an ALS 4 repeat. N507 carries an N-linked (GlcNAc...) asparagine glycan. One copy of the ALS 5 repeat lies at 510 to 541 (VTTTEYWSQSYATTTTVTAPPGGTDTVLIREP). Residue N543 is glycosylated (N-linked (GlcNAc...) asparagine). Residues 546-577 (VTTTEYWSQSYATTTTVTAPPGGTDTVIIREP) form an ALS 6 repeat. N579 carries an N-linked (GlcNAc...) asparagine glycan. The stretch at 582-613 (VTTTEYWSQSYATTTTITAPPGETDTVIIREP) is one ALS 7 repeat. N615 carries N-linked (GlcNAc...) asparagine glycosylation. One copy of the ALS 8 repeat lies at 618–649 (VTTTEYWSQSYATTTTVTAPPGGTDTVLIREP). The N-linked (GlcNAc...) asparagine glycan is linked to N651. An ALS 9 repeat occupies 654-685 (VTTTEYWSQSYATTTTVTAPPGGTDTVLIREP). A glycan (N-linked (GlcNAc...) asparagine) is linked at N687. The ALS 10 repeat unit spans residues 690-721 (VTTTEYWSQSYATTTTVTAPPGGTDTVIIREP). N723 carries N-linked (GlcNAc...) asparagine glycosylation. An ALS 11 repeat occupies 726–757 (VTTTEYWSQSYATTTTVTAPPGGTDTVIIREP). N-linked (GlcNAc...) asparagine glycosylation is present at N759. The ALS 12 repeat unit spans residues 762–791 (VTTTEYWSQSFATTTTVTAPPGGTDTVIIY). N-linked (GlcNAc...) asparagine glycans are attached at residues N820, N886, N918, and N973. Polar residues-rich tracts occupy residues 896-918 (PTAS…SSDN) and 964-979 (KVTF…GTHD). 2 disordered regions span residues 896 to 924 (PTAS…KSGV) and 954 to 1226 (SIPS…SSSP). The span at 980-995 (SQSTSTEIEIVTTSST) shows a compositional bias: low complexity. Positions 1002-1062 (VSSNTDLTSE…PTVATSTLAS (61 aa)) are enriched in polar residues. Residues N1045 and N1068 are each glycosylated (N-linked (GlcNAc...) asparagine). The segment covering 1073 to 1090 (HESASTSLKPSMGENSGL) has biased composition (polar residues). A compositionally biased stretch (low complexity) spans 1091-1110 (TTSTEIEATTTSPTEAPSPA). Residues 1111–1154 (VSSGTDVTTEPTDTREQPTTLSTTSKTNSESVATTQATNENGGK) show a composition bias toward polar residues. 2 stretches are compositionally biased toward low complexity: residues 1155 to 1176 (SPST…SANS) and 1197 to 1226 (SHST…SSSP). G1238 carries GPI-anchor amidated glycine lipidation. A propeptide spans 1239–1260 (SGSIIQHSTWLYGLITLLSLFI) (removed in mature form).

It belongs to the ALS family. Post-translationally, the GPI-anchor is attached to the protein in the endoplasmic reticulum and serves to target the protein to the cell surface. There, the glucosamine-inositol phospholipid moiety is cleaved off and the GPI-modified mannoprotein is covalently attached via its lipidless GPI glycan remnant to the 1,6-beta-glucan of the outer cell wall layer.

The protein resides in the cell membrane. It localises to the secreted. Its subcellular location is the cell wall. Its function is as follows. Major cell surface adhesion protein which mediates both yeast-to-host tissue adherence and yeast aggregation. Acts as a downstream effector of the EFG1 regulatory pathway. Required for rapamycin-induced aggregation of C.albicans. Binds glycans and mediates adherence to endothelial and epithelial cells, thereby playing an important role in the pathogenesis of C.albicans infections. This is Agglutinin-like protein 1 (ALS1) from Candida albicans (strain SC5314 / ATCC MYA-2876) (Yeast).